We begin with the raw amino-acid sequence, 216 residues long: Pyrophosphatase PpaX (216 aa).

Asp-9 serves as the catalytic Nucleophile.

This sequence belongs to the HAD-like hydrolase superfamily. PpaX family. The cofactor is Mg(2+).

It carries out the reaction diphosphate + H2O = 2 phosphate + H(+). Functionally, hydrolyzes pyrophosphate formed during P-Ser-HPr dephosphorylation by HPrK/P. Might play a role in controlling the intracellular pyrophosphate pool. This chain is Pyrophosphatase PpaX, found in Bacillus thuringiensis (strain Al Hakam).